The sequence spans 452 residues: Caspase-2 (452 aa).

Alanine 2 bears the N-acetylalanine mark. Positions 2–169 are excised as a propeptide; sequence AAPSAGSWST…TVEHSLDNKD (168 aa). A CARD domain is found at 32–121; that stretch reads MHPHHQETLK…GHLEDMLLTT (90 aa). Serine 157 is subject to Phosphoserine. Active-site residues include histidine 277 and cysteine 320. A propeptide spanning residues 326–333 is cleaved from the precursor; it reads DRGVDQQD. The span at 327 to 336 shows a compositional bias: basic and acidic residues; that stretch reads RGVDQQDGKN. Residues 327-354 form a disordered region; sequence RGVDQQDGKNHAGSPGCEESDAGKEKLP. Residue serine 340 is modified to Phosphoserine.

The protein belongs to the peptidase C14A family. As to quaternary structure, heterotetramer that consists of two anti-parallel arranged heterodimers, each one formed by a p18 subunit and a p12 subunit. Forms a complex named the PIDDosome with PIDD1 and CRADD. Interacts with NOL3 (via CARD domain); inhibits CASP2 activity in a phosphorylation-dependent manner. The mature protease can process its own propeptide, but not that of other caspases. As to expression, expressed at higher levels in the embryonic lung, liver and kidney than in the heart and brain. In adults, higher level expression is seen in the placenta, lung, kidney, and pancreas than in the heart, brain, liver and skeletal muscle.

It carries out the reaction Strict requirement for an Asp residue at P1, with 316-Asp being essential for proteolytic activity and has a preferred cleavage sequence of Val-Asp-Val-Ala-Asp-|-.. Is a regulator of the cascade of caspases responsible for apoptosis execution. Might function by either activating some proteins required for cell death or inactivating proteins necessary for cell survival. Associates with PIDD1 and CRADD to form the PIDDosome, a complex that activates CASP2 and triggers apoptosis in response to genotoxic stress. Its function is as follows. Acts as a positive regulator of apoptosis. Functionally, acts as a negative regulator of apoptosis. In terms of biological role, may function as an endogenous apoptosis inhibitor that antagonizes caspase activation and cell death. The protein is Caspase-2 (CASP2) of Homo sapiens (Human).